Consider the following 411-residue polypeptide: Translation initiation factor 2 subunit gamma (411 aa).

Residues 9 to 201 enclose the tr-type G domain; the sequence is QPSVNIGMVG…AIEKYIPSPK (193 aa). The tract at residues 18 to 25 is G1; sequence GHVDHGKS. Residues Asp21, Ser25, Gly46, and Ser48 each coordinate Mg(2+). Position 21–26 (21–26) interacts with GTP; it reads DHGKST. Positions 46–50 are G2; that stretch reads GISIK. The G3 stretch occupies residues 88–91; it reads DAPG. GTP-binding positions include 144-147 and 179-181; these read NKID and SAY. The segment at 144 to 147 is G4; it reads NKID. The tract at residues 179 to 181 is G5; the sequence is SAY.

This sequence belongs to the TRAFAC class translation factor GTPase superfamily. Classic translation factor GTPase family. EIF2G subfamily. Heterotrimer composed of an alpha, a beta and a gamma chain. Requires Mg(2+) as cofactor.

The enzyme catalyses GTP + H2O = GDP + phosphate + H(+). Functionally, eIF-2 functions in the early steps of protein synthesis by forming a ternary complex with GTP and initiator tRNA. The polypeptide is Translation initiation factor 2 subunit gamma (Thermoplasma acidophilum (strain ATCC 25905 / DSM 1728 / JCM 9062 / NBRC 15155 / AMRC-C165)).